A 433-amino-acid chain; its full sequence is D-amino acid dehydrogenase (433 aa).

An FAD-binding site is contributed by 3 to 17 (IVVLGAGVLGVTSAW).

The protein belongs to the DadA oxidoreductase family. The cofactor is FAD.

The enzyme catalyses a D-alpha-amino acid + A + H2O = a 2-oxocarboxylate + AH2 + NH4(+). It participates in amino-acid degradation; D-alanine degradation; NH(3) and pyruvate from D-alanine: step 1/1. Oxidative deamination of D-amino acids. This chain is D-amino acid dehydrogenase, found in Paracoccus denitrificans (strain Pd 1222).